A 532-amino-acid chain; its full sequence is Phosphoenolpyruvate carboxykinase (ATP) (532 aa).

The substrate site is built by R60, Y194, and K200. Residues K200, H219, and 237–245 (GLSGTGKTT) each bind ATP. The Mn(2+) site is built by K200 and H219. D258 is a binding site for Mn(2+). Positions 286, 324, and 449 each coordinate ATP. R324 contributes to the substrate binding site.

Belongs to the phosphoenolpyruvate carboxykinase (ATP) family. Mn(2+) serves as cofactor.

The protein resides in the cytoplasm. The catalysed reaction is oxaloacetate + ATP = phosphoenolpyruvate + ADP + CO2. It participates in carbohydrate biosynthesis; gluconeogenesis. Functionally, involved in the gluconeogenesis. Catalyzes the conversion of oxaloacetate (OAA) to phosphoenolpyruvate (PEP) through direct phosphoryl transfer between the nucleoside triphosphate and OAA. The polypeptide is Phosphoenolpyruvate carboxykinase (ATP) (Cereibacter sphaeroides (strain ATCC 17029 / ATH 2.4.9) (Rhodobacter sphaeroides)).